The following is a 546-amino-acid chain: Chaperonin GroEL 2 (546 aa).

Residues 30–33 (TLGP), K51, 87–91 (DGTTT), G415, 479–481 (NAA), and D495 contribute to the ATP site. Positions 524 to 546 (APKDAPPAQPAGVPGAGGTGFDF) are disordered. A compositionally biased stretch (gly residues) spans 537 to 546 (PGAGGTGFDF).

Belongs to the chaperonin (HSP60) family. Forms a cylinder of 14 subunits composed of two heptameric rings stacked back-to-back. Interacts with the co-chaperonin GroES.

The protein resides in the cytoplasm. It carries out the reaction ATP + H2O + a folded polypeptide = ADP + phosphate + an unfolded polypeptide.. Its function is as follows. Together with its co-chaperonin GroES, plays an essential role in assisting protein folding. The GroEL-GroES system forms a nano-cage that allows encapsulation of the non-native substrate proteins and provides a physical environment optimized to promote and accelerate protein folding. The chain is Chaperonin GroEL 2 from Burkholderia thailandensis (strain ATCC 700388 / DSM 13276 / CCUG 48851 / CIP 106301 / E264).